The primary structure comprises 396 residues: Elongation factor Tu 1 (396 aa).

A tr-type G domain is found at 10 to 206 (KPHVNVGTIG…QIDSYIPEPE (197 aa)). The interval 19–26 (GHIDHGKT) is G1. 19-26 (GHIDHGKT) lines the GTP pocket. Thr-26 provides a ligand contact to Mg(2+). Residues 60–64 (GITIA) form a G2 region. The G3 stretch occupies residues 81–84 (DCPG). GTP contacts are provided by residues 81 to 85 (DCPGH) and 136 to 139 (NKCD). The interval 136 to 139 (NKCD) is G4. The tract at residues 174 to 176 (SAL) is G5.

This sequence belongs to the TRAFAC class translation factor GTPase superfamily. Classic translation factor GTPase family. EF-Tu/EF-1A subfamily. As to quaternary structure, monomer.

The protein resides in the cytoplasm. The enzyme catalyses GTP + H2O = GDP + phosphate + H(+). In terms of biological role, GTP hydrolase that promotes the GTP-dependent binding of aminoacyl-tRNA to the A-site of ribosomes during protein biosynthesis. The sequence is that of Elongation factor Tu 1 from Desulfotalea psychrophila (strain LSv54 / DSM 12343).